Here is a 96-residue protein sequence, read N- to C-terminus: Phosphoribosyl-ATP pyrophosphatase (96 aa).

This sequence belongs to the PRA-PH family.

The protein localises to the cytoplasm. The enzyme catalyses 1-(5-phospho-beta-D-ribosyl)-ATP + H2O = 1-(5-phospho-beta-D-ribosyl)-5'-AMP + diphosphate + H(+). It functions in the pathway amino-acid biosynthesis; L-histidine biosynthesis; L-histidine from 5-phospho-alpha-D-ribose 1-diphosphate: step 2/9. This chain is Phosphoribosyl-ATP pyrophosphatase, found in Methanobrevibacter smithii (strain ATCC 35061 / DSM 861 / OCM 144 / PS).